The following is a 329-amino-acid chain: GTP 3',8-cyclase (329 aa).

One can recognise a Radical SAM core domain in the interval 8–234 (AFARKFFYLR…QIRQRSDGPA (227 aa)). Residue Arg-17 coordinates GTP. Positions 24 and 28 each coordinate [4Fe-4S] cluster. Tyr-30 provides a ligand contact to S-adenosyl-L-methionine. [4Fe-4S] cluster is bound at residue Cys-31. Arg-68 contributes to the GTP binding site. S-adenosyl-L-methionine is bound at residue Gly-72. A GTP-binding site is contributed by Thr-99. Ser-123 lines the S-adenosyl-L-methionine pocket. Residue Lys-160 coordinates GTP. Position 194 (Met-194) interacts with S-adenosyl-L-methionine. Positions 257 and 260 each coordinate [4Fe-4S] cluster. 262–264 (RLR) is a GTP binding site. Cys-274 contacts [4Fe-4S] cluster.

This sequence belongs to the radical SAM superfamily. MoaA family. As to quaternary structure, monomer and homodimer. [4Fe-4S] cluster is required as a cofactor.

The enzyme catalyses GTP + AH2 + S-adenosyl-L-methionine = (8S)-3',8-cyclo-7,8-dihydroguanosine 5'-triphosphate + 5'-deoxyadenosine + L-methionine + A + H(+). It participates in cofactor biosynthesis; molybdopterin biosynthesis. In terms of biological role, catalyzes the cyclization of GTP to (8S)-3',8-cyclo-7,8-dihydroguanosine 5'-triphosphate. This is GTP 3',8-cyclase from Klebsiella pneumoniae (strain 342).